The chain runs to 171 residues: Large ribosomal subunit protein bL9 (171 aa).

Belongs to the bacterial ribosomal protein bL9 family.

Functionally, binds to the 23S rRNA. The chain is Large ribosomal subunit protein bL9 from Rickettsia conorii (strain ATCC VR-613 / Malish 7).